We begin with the raw amino-acid sequence, 113 residues long: uncharacterized protein (113 aa).

The protein localises to the mitochondrion. This is an uncharacterized protein from Arabidopsis thaliana (Mouse-ear cress).